A 197-amino-acid polypeptide reads, in one-letter code: Probable 26S proteasome non-ATPase regulatory subunit 9 (197 aa).

One can recognise a PDZ domain in the interval 75–166 (KIVVEMENEN…KIIRVTVIRE (92 aa)).

It belongs to the proteasome subunit p27 family.

Functionally, acts as a chaperone during the assembly of the 26S proteasome, specifically of the base subcomplex of the 19S regulatory complex (RC). The chain is Probable 26S proteasome non-ATPase regulatory subunit 9 (psmd-9) from Caenorhabditis elegans.